Consider the following 406-residue polypeptide: Tryptophan synthase beta chain (406 aa).

K99 bears the N6-(pyridoxal phosphate)lysine mark.

This sequence belongs to the TrpB family. As to quaternary structure, tetramer of two alpha and two beta chains. The cofactor is pyridoxal 5'-phosphate.

The catalysed reaction is (1S,2R)-1-C-(indol-3-yl)glycerol 3-phosphate + L-serine = D-glyceraldehyde 3-phosphate + L-tryptophan + H2O. It participates in amino-acid biosynthesis; L-tryptophan biosynthesis; L-tryptophan from chorismate: step 5/5. The beta subunit is responsible for the synthesis of L-tryptophan from indole and L-serine. This Methylobacterium nodulans (strain LMG 21967 / CNCM I-2342 / ORS 2060) protein is Tryptophan synthase beta chain.